A 640-amino-acid polypeptide reads, in one-letter code: PTS system mannitol-specific EIICBA component (640 aa).

One can recognise a PTS EIIC type-2 domain in the interval 12–343 (LGRFLSAMIM…LKISNRNHYV (332 aa)). 6 helical membrane-spanning segments follow: residues 24 to 45 (ISVF…WCPN), 50 to 70 (KVLS…TGGY), 134 to 155 (SVGI…PMIE), 165 to 185 (VNLM…EPAK), 273 to 292 (LILG…GGLI), and 313 to 334 (VINL…CMLL). The 97-residue stretch at 379-475 (RNIIFACDAG…YLVENNLDNN (97 aa)) folds into the PTS EIIB type-2 domain. C385 functions as the Phosphocysteine intermediate; for EIIB activity in the catalytic mechanism. C385 is modified (phosphocysteine; by EIIA). Residues 496-638 (FSLTKENIFL…DDVLYLFSRK (143 aa)) enclose the PTS EIIA type-2 domain. The Tele-phosphohistidine intermediate; for EIIA activity role is filled by H556. H556 carries the phosphohistidine; by HPr modification.

In terms of assembly, homodimer. In terms of processing, an intramolecular phosphotransfer takes places between His-556 and Cys-385.

Its subcellular location is the cell inner membrane. It carries out the reaction D-mannitol(out) + N(pros)-phospho-L-histidyl-[protein] = D-mannitol 1-phosphate(in) + L-histidyl-[protein]. Functionally, the phosphoenolpyruvate-dependent sugar phosphotransferase system (sugar PTS), a major carbohydrate active transport system, catalyzes the phosphorylation of incoming sugar substrates concomitantly with their translocation across the cell membrane. This system is involved in D-mannitol transport. The protein is PTS system mannitol-specific EIICBA component (mtlA) of Buchnera aphidicola subsp. Baizongia pistaciae (strain Bp).